The sequence spans 39 residues: MTPSLANFLWSLVLGAAIVLIPATIGLIFISQYDKIKRT.

The chain crosses the membrane as a helical span at residues 10-30; the sequence is WSLVLGAAIVLIPATIGLIFI.

The protein belongs to the PsbX family. Type 1 subfamily. PSII is composed of 1 copy each of membrane proteins PsbA, PsbB, PsbC, PsbD, PsbE, PsbF, PsbH, PsbI, PsbJ, PsbK, PsbL, PsbM, PsbT, PsbX, PsbY, PsbZ, Psb30/Ycf12, peripheral proteins PsbO, CyanoQ (PsbQ), PsbU, PsbV and a large number of cofactors. It forms dimeric complexes.

Its subcellular location is the cellular thylakoid membrane. Functionally, involved in the binding and/or turnover of quinones at the Q(B) site of photosystem II (PSII). PSII is a light-driven water plastoquinone oxidoreductase, using light energy to abstract electrons from H(2)O, generating a proton gradient subsequently used for ATP formation. The protein is Photosystem II reaction center protein X of Microcystis aeruginosa (strain NIES-843 / IAM M-2473).